The sequence spans 115 residues: Macrophage migration inhibitory factor (115 aa).

P2 (proton acceptor; via imino nitrogen) is an active-site residue. Residues K33 and I65 each contribute to the substrate site. An N6-acetyllysine; alternate modification is found at K78. Residue K78 is modified to N6-succinyllysine; alternate. Position 98 (N98) interacts with substrate.

This sequence belongs to the MIF family. Homotrimer. Interacts with CXCR2 extracellular domain. Interacts with the CD74 extracellular domain, USO1, COPS5 and BNIPL.

Its subcellular location is the secreted. The protein resides in the cytoplasm. The enzyme catalyses 3-phenylpyruvate = enol-phenylpyruvate. It carries out the reaction L-dopachrome = 5,6-dihydroxyindole-2-carboxylate. Pro-inflammatory cytokine involved in the innate immune response to bacterial pathogens. The expression of MIF at sites of inflammation suggests a role as mediator in regulating the function of macrophages in host defense. Counteracts the anti-inflammatory activity of glucocorticoids. Has phenylpyruvate tautomerase and dopachrome tautomerase activity (in vitro), but the physiological substrate is not known. It is not clear whether the tautomerase activity has any physiological relevance, and whether it is important for cytokine activity. This Homo sapiens (Human) protein is Macrophage migration inhibitory factor.